The chain runs to 162 residues: Ribosome maturation factor RimM (162 aa).

A PRC barrel domain is found at 86–160 (EGRYYYFALI…SIHVDPIPGL (75 aa)).

This sequence belongs to the RimM family. As to quaternary structure, binds ribosomal protein uS19.

It is found in the cytoplasm. Its function is as follows. An accessory protein needed during the final step in the assembly of 30S ribosomal subunit, possibly for assembly of the head region. Essential for efficient processing of 16S rRNA. May be needed both before and after RbfA during the maturation of 16S rRNA. It has affinity for free ribosomal 30S subunits but not for 70S ribosomes. The polypeptide is Ribosome maturation factor RimM (Thermus thermophilus (strain ATCC 27634 / DSM 579 / HB8)).